The chain runs to 539 residues: Putative cysteine ligase BshC (539 aa).

Residues 249–270 adopt a coiled-coil conformation; it reads VETNDEVTNRLNESQAAMKRAG.

Belongs to the BshC family.

Functionally, involved in bacillithiol (BSH) biosynthesis. May catalyze the last step of the pathway, the addition of cysteine to glucosamine malate (GlcN-Mal) to generate BSH. The polypeptide is Putative cysteine ligase BshC (Bacillus pumilus (strain SAFR-032)).